Reading from the N-terminus, the 596-residue chain is Elongation factor 4 (596 aa).

Residues 2-183 (ENIRNFSIIA…AIIKRIPAPK (182 aa)) enclose the tr-type G domain. Residues 14-19 (DHGKST) and 130-133 (NKID) each bind GTP.

It belongs to the TRAFAC class translation factor GTPase superfamily. Classic translation factor GTPase family. LepA subfamily.

It localises to the cell inner membrane. The catalysed reaction is GTP + H2O = GDP + phosphate + H(+). Required for accurate and efficient protein synthesis under certain stress conditions. May act as a fidelity factor of the translation reaction, by catalyzing a one-codon backward translocation of tRNAs on improperly translocated ribosomes. Back-translocation proceeds from a post-translocation (POST) complex to a pre-translocation (PRE) complex, thus giving elongation factor G a second chance to translocate the tRNAs correctly. Binds to ribosomes in a GTP-dependent manner. This chain is Elongation factor 4, found in Campylobacter hominis (strain ATCC BAA-381 / DSM 21671 / CCUG 45161 / LMG 19568 / NCTC 13146 / CH001A).